The sequence spans 122 residues: UPF0231 protein VP2494 (122 aa).

This sequence belongs to the UPF0231 family.

The protein is UPF0231 protein VP2494 of Vibrio parahaemolyticus serotype O3:K6 (strain RIMD 2210633).